The sequence spans 513 residues: Ankyrin repeat domain-containing protein 13C-B (513 aa).

The span at 1–19 shows a compositional bias: basic and acidic residues; it reads MTGEKIRSLHRDQKPSKDE. 2 disordered regions span residues 1-34 and 55-77; these read MTGE…DGTF and PSNP…PMTP. Over residues 20–29 the composition is skewed to acidic residues; the sequence is DLLEPDEEAT. 3 ANK repeats span residues 83 to 114, 115 to 144, and 148 to 177; these read DVYF…QKDN, HGNT…PVKV, and QGWS…QQSR.

Its subcellular location is the endoplasmic reticulum membrane. Its function is as follows. Acts as a molecular chaperone for G protein-coupled receptors, regulating their biogenesis and exit from the ER. This Xenopus laevis (African clawed frog) protein is Ankyrin repeat domain-containing protein 13C-B (ankrd13c-b).